Reading from the N-terminus, the 140-residue chain is Ribosomal RNA large subunit methyltransferase H (140 aa).

S-adenosyl-L-methionine is bound by residues Leu55 and Gly87.

It belongs to the RNA methyltransferase RlmH family. Homodimer.

The protein resides in the cytoplasm. The enzyme catalyses pseudouridine(1915) in 23S rRNA + S-adenosyl-L-methionine = N(3)-methylpseudouridine(1915) in 23S rRNA + S-adenosyl-L-homocysteine + H(+). In terms of biological role, specifically methylates the pseudouridine at position 1915 (m3Psi1915) in 23S rRNA. This Erythrobacter litoralis (strain HTCC2594) protein is Ribosomal RNA large subunit methyltransferase H.